The chain runs to 87 residues: U3-theraphotoxin-Hhn1a 5 (87 aa).

The first 24 residues, Met-1–Ala-24, serve as a signal peptide directing secretion. The propeptide occupies Ser-25–Arg-52. Disulfide bonds link Cys-54-Cys-67, Cys-61-Cys-72, and Cys-66-Cys-79.

This sequence belongs to the neurotoxin 10 (Hwtx-1) family. 51 (Hntx-8) subfamily. Hntx-8 sub-subfamily. As to expression, expressed by the venom gland.

Its subcellular location is the secreted. In terms of biological role, ion channel inhibitor. The protein is U3-theraphotoxin-Hhn1a 5 of Cyriopagopus hainanus (Chinese bird spider).